A 908-amino-acid polypeptide reads, in one-letter code: NADH-quinone oxidoreductase subunit G (908 aa).

The 2Fe-2S ferredoxin-type domain occupies 2 to 83; it reads ATIHVDGKEY…GTFISIDDEE (82 aa). Residues Cys-34, Cys-45, Cys-48, and Cys-67 each coordinate [2Fe-2S] cluster. In terms of domain architecture, 4Fe-4S His(Cys)3-ligated-type spans 83–122; it reads EAKQFRESVVEWLMTNHPHDCPVCEEGGNCHLQDMTVMTG. Positions 99, 103, 106, 112, 151, 154, 157, 201, 228, 231, 235, and 263 each coordinate [4Fe-4S] cluster. The 4Fe-4S Mo/W bis-MGD-type domain maps to 221-277; it reads MQFAPSICQQCSIGCNISPGERYGELRRIENRYNGTVNHYFLCDRGRFGYGYVNLKD.

This sequence belongs to the complex I 75 kDa subunit family. In terms of assembly, composed of 13 different subunits. Subunits NuoCD, E, F, and G constitute the peripheral sector of the complex. [2Fe-2S] cluster serves as cofactor. [4Fe-4S] cluster is required as a cofactor.

It catalyses the reaction a quinone + NADH + 5 H(+)(in) = a quinol + NAD(+) + 4 H(+)(out). NDH-1 shuttles electrons from NADH, via FMN and iron-sulfur (Fe-S) centers, to quinones in the respiratory chain. The immediate electron acceptor for the enzyme in this species is believed to be ubiquinone. Couples the redox reaction to proton translocation (for every two electrons transferred, four hydrogen ions are translocated across the cytoplasmic membrane), and thus conserves the redox energy in a proton gradient. This Salmonella typhi protein is NADH-quinone oxidoreductase subunit G (nuoG).